A 423-amino-acid chain; its full sequence is MFYDEAKIYVKGGDGGNGIVAFRREKYVPRGGPNGGDGGRGGSVILEADAGLRTLVDFRYRAHYRAERGQHGQGKNKHGRSAPDLILRVPVGVVVRDATSGQVLADLVEDGQRVVVAAGGRGGRGNARFVTSTDRAPTFAEKGEPGEERWLVLELKLLADVGLIGLPNAGKSTLLARISAARPKIADYPFTTLTPNLGVVRLEDGDSFVVADIPGLIAGAHQGAGLGLKFLRHIERTRVLVHVLDTSQPGEDVLAGWRTVNDELAHYNPELARRPQVVAANKMDIPGGEEKVAFLRERLGDSYRIFPISAATGEGVQELLYHVSGLLATLPPPAPVTAPEEEKVTALAPEELTIEREGQVFIVKNPDVERRVAMTYLDNEEAVRRLQVYLKQKGVDDALRRAGAATGAIIRIGKFEFEYVEEP.

Residues 1-158 form the Obg domain; that stretch reads MFYDEAKIYV…RWLVLELKLL (158 aa). Positions 159–328 constitute an OBG-type G domain; sequence ADVGLIGLPN…LLYHVSGLLA (170 aa). Residues 165–172, 190–194, 212–215, 281–284, and 309–311 each bind GTP; these read GLPNAGKS, FTTLT, DIPG, NKMD, and SAA. The Mg(2+) site is built by serine 172 and threonine 192. In terms of domain architecture, OCT spans 336-421; it reads VTAPEEEKVT…IGKFEFEYVE (86 aa).

The protein belongs to the TRAFAC class OBG-HflX-like GTPase superfamily. OBG GTPase family. Monomer. Mg(2+) is required as a cofactor.

Its subcellular location is the cytoplasm. In terms of biological role, an essential GTPase which binds GTP, GDP and possibly (p)ppGpp with moderate affinity, with high nucleotide exchange rates and a fairly low GTP hydrolysis rate. Plays a role in control of the cell cycle, stress response, ribosome biogenesis and in those bacteria that undergo differentiation, in morphogenesis control. This chain is GTPase Obg, found in Moorella thermoacetica (strain ATCC 39073 / JCM 9320).